The sequence spans 368 residues: uncharacterized protein (368 aa).

It belongs to the CdaR family.

This is an uncharacterized protein from Bacillus subtilis (strain 168).